Here is a 45-residue protein sequence, read N- to C-terminus: Small polypeptide DEVIL 2 (45 aa).

The interval 14-45 (SQSRRLGKYLKEQKGRIYIIRRCVMMLLCSHD) is required for DVL/RTFL small polypeptide activity. Residues 17 to 33 (RRLGKYLKEQKGRIYII) form a helical membrane-spanning segment.

This sequence belongs to the DVL/RTFL small polypeptides family. In terms of tissue distribution, mostly expressed in stems and, to a lower extent, in roots and leaves.

Its subcellular location is the cell membrane. Small polypeptide acting as a regulatory molecule which coordinates cellular responses required for differentiation, growth and development, including leaves shape, pedicule elongation, inflorescence organization and fruit maturation, probably by restricting polar cell proliferation in lateral organs and coordinating socket cell recruitment and differentiation at trichome sites. The chain is Small polypeptide DEVIL 2 from Arabidopsis thaliana (Mouse-ear cress).